The primary structure comprises 113 residues: Large ribosomal subunit protein P2 (113 aa).

Residues 66 to 113 (PVGGGGAVAAADAAPAAAAGGDKKEAKKEEKKEESESEDDDMGFALFE) form a disordered region. The segment covering 73 to 85 (VAAADAAPAAAAG) has biased composition (low complexity). Over residues 86–99 (GDKKEAKKEEKKEE) the composition is skewed to basic and acidic residues. Ser100 and Ser102 each carry phosphoserine.

It belongs to the eukaryotic ribosomal protein P1/P2 family. As to quaternary structure, P1 and P2 exist as dimers at the large ribosomal subunit.

Its function is as follows. Plays an important role in the elongation step of protein synthesis. In Drosophila melanogaster (Fruit fly), this protein is Large ribosomal subunit protein P2 (RpLP2).